The sequence spans 685 residues: Methionine--tRNA ligase (685 aa).

Positions 142, 145, 155, and 158 each coordinate Zn(2+). The short motif at 330–334 (KMSKS) is the 'KMSKS' region element. Position 333 (Lys-333) interacts with ATP. The tRNA-binding domain occupies 584 to 685 (DFIKVDLRVA…SGAKPGDKVS (102 aa)).

The protein belongs to the class-I aminoacyl-tRNA synthetase family. MetG type 1 subfamily. In terms of assembly, homodimer. The cofactor is Zn(2+).

The protein localises to the cytoplasm. It carries out the reaction tRNA(Met) + L-methionine + ATP = L-methionyl-tRNA(Met) + AMP + diphosphate. Its function is as follows. Is required not only for elongation of protein synthesis but also for the initiation of all mRNA translation through initiator tRNA(fMet) aminoacylation. The protein is Methionine--tRNA ligase of Acinetobacter baylyi (strain ATCC 33305 / BD413 / ADP1).